Consider the following 89-residue polypeptide: Small ribosomal subunit protein uS15 (89 aa).

It belongs to the universal ribosomal protein uS15 family. Part of the 30S ribosomal subunit. Forms a bridge to the 50S subunit in the 70S ribosome, contacting the 23S rRNA.

Its function is as follows. One of the primary rRNA binding proteins, it binds directly to 16S rRNA where it helps nucleate assembly of the platform of the 30S subunit by binding and bridging several RNA helices of the 16S rRNA. Functionally, forms an intersubunit bridge (bridge B4) with the 23S rRNA of the 50S subunit in the ribosome. The protein is Small ribosomal subunit protein uS15 of Lysinibacillus sphaericus (strain C3-41).